A 278-amino-acid polypeptide reads, in one-letter code: Large ribosomal subunit protein uL2 (278 aa).

The interval 223–278 (GVAMNPIDHPHGGGEGRTSGGRHPVTPWGFPTKGKKTRSNKRTDTFIVSSRHNRKK) is disordered.

The protein belongs to the universal ribosomal protein uL2 family. As to quaternary structure, part of the 50S ribosomal subunit. Forms a bridge to the 30S subunit in the 70S ribosome.

Functionally, one of the primary rRNA binding proteins. Required for association of the 30S and 50S subunits to form the 70S ribosome, for tRNA binding and peptide bond formation. It has been suggested to have peptidyltransferase activity; this is somewhat controversial. Makes several contacts with the 16S rRNA in the 70S ribosome. The chain is Large ribosomal subunit protein uL2 from Methylobacterium nodulans (strain LMG 21967 / CNCM I-2342 / ORS 2060).